The following is a 217-amino-acid chain: Zinc finger CCHC-type and RNA-binding motif-containing protein 1 (217 aa).

Residues 10–88 form the RRM domain; that stretch reads STVYVSNLPF…RVIKASIAID (79 aa). The CCHC-type zinc finger occupies 105–122; sequence SKCYECGESGHLSYACPK. A disordered region spans residues 120 to 217; it reads CPKNMLGERE…YFSDEEELSD (98 aa). Residues 145 to 163 show a composition bias toward acidic residues; the sequence is PEEEIEEVEVSEEEGEDPA. 3 positions are modified to phosphoserine: Ser155, Ser210, and Ser216.

As to quaternary structure, component of the U11/U12 snRNPs that are part of the U12-type spliceosome. Interacts with ZRSR1. As to expression, expressed at higher level in heart and testis, and at lower level in cerebellum. Weakly expressed at low level in liver.

It is found in the nucleus. The protein resides in the nucleoplasm. The sequence is that of Zinc finger CCHC-type and RNA-binding motif-containing protein 1 (Zcrb1) from Mus musculus (Mouse).